A 346-amino-acid chain; its full sequence is Fe(3+) ions import ATP-binding protein FbpC 1 (346 aa).

In terms of domain architecture, ABC transporter spans 5–235 (LEVDGVDKSF…PIDVPTAEFI (231 aa)). 37–44 (GPSGCGKT) serves as a coordination point for ATP.

The protein belongs to the ABC transporter superfamily. Fe(3+) ion importer (TC 3.A.1.10) family. In terms of assembly, the complex is composed of two ATP-binding proteins (FbpC), two transmembrane proteins (FbpB) and a solute-binding protein (FbpA).

The protein localises to the cell membrane. The catalysed reaction is Fe(3+)(out) + ATP + H2O = Fe(3+)(in) + ADP + phosphate + H(+). Part of the ABC transporter complex FbpABC involved in Fe(3+) ions import. Responsible for energy coupling to the transport system. This is Fe(3+) ions import ATP-binding protein FbpC 1 from Rhodococcus jostii (strain RHA1).